The following is a 265-amino-acid chain: 6-carboxyhexanoate--CoA ligase (265 aa).

This sequence belongs to the BioW family. Homodimer. It depends on Mg(2+) as a cofactor.

It carries out the reaction heptanedioate + ATP + CoA = 6-carboxyhexanoyl-CoA + AMP + diphosphate. The protein operates within metabolic intermediate metabolism; pimeloyl-CoA biosynthesis; pimeloyl-CoA from pimelate: step 1/1. In terms of biological role, catalyzes the transformation of pimelate into pimeloyl-CoA with concomitant hydrolysis of ATP to AMP. The polypeptide is 6-carboxyhexanoate--CoA ligase (Syntrophotalea carbinolica (strain DSM 2380 / NBRC 103641 / GraBd1) (Pelobacter carbinolicus)).